The following is a 441-amino-acid chain: Proline--tRNA ligase (441 aa).

The protein belongs to the class-II aminoacyl-tRNA synthetase family. ProS type 2 subfamily. In terms of assembly, homodimer.

It localises to the cytoplasm. It catalyses the reaction tRNA(Pro) + L-proline + ATP = L-prolyl-tRNA(Pro) + AMP + diphosphate. Catalyzes the attachment of proline to tRNA(Pro) in a two-step reaction: proline is first activated by ATP to form Pro-AMP and then transferred to the acceptor end of tRNA(Pro). This chain is Proline--tRNA ligase, found in Methylobacterium radiotolerans (strain ATCC 27329 / DSM 1819 / JCM 2831 / NBRC 15690 / NCIMB 10815 / 0-1).